The sequence spans 724 residues: Hyaluronan mediated motility receptor (724 aa).

2 disordered regions span residues 1–22 (MSFPKAPLKRFNDPSGCAPSPG) and 40–81 (KSQR…QKND). At S20 the chain carries Phosphoserine. Basic and acidic residues-rich tracts occupy residues 46–60 (QQKESKQNLNVDKDT) and 70–81 (KSSESKESQKND). N133, N477, N567, and N588 each carry an N-linked (GlcNAc...) asparagine glycan. Residues 365 to 546 (EEMVKEKNLF…ITDLQNQLKQ (182 aa)) form a required for interaction with FAM83D region. Hyaluronic acid-binding stretches follow at residues 635–645 (KQKIKHVVKLK) and 657–666 (KLRCQLAKKK). T703 bears the Phosphothreonine mark.

In terms of assembly, interacts with ANKRD26. Interacts with DYNLL1. Interacts with FAM83D/CHICA. In terms of tissue distribution, expressed in testis. Expressed in the breast.

The protein resides in the cell surface. It is found in the cytoplasm. Its subcellular location is the cytoskeleton. The protein localises to the spindle. In terms of biological role, receptor for hyaluronic acid (HA). Involved in cell motility. When hyaluronan binds to HMMR, the phosphorylation of a number of proteins, including PTK2/FAK1 occurs. May also be involved in cellular transformation and metastasis formation, and in regulating extracellular-regulated kinase (ERK) activity. May act as a regulator of adipogenisis. This chain is Hyaluronan mediated motility receptor (HMMR), found in Homo sapiens (Human).